The chain runs to 453 residues: Magnesium transporter MgtE (453 aa).

The Cytoplasmic segment spans residues 1 to 286 (MNEGQEMEEQ…ENPLKAASKR (286 aa)). E71, D98, D102, E136, A140, Y176, R227, D230, A233, D251, and E259 together coordinate Mg(2+). 2 consecutive CBS domains span residues 142–205 (MTTE…IADI) and 206–262 (LNER…EAAS). The chain crosses the membrane as a helical span at residues 287–307 (LPWLITLLFLGMSTASLISNY). Residue E308 is a topological domain, extracellular. Residues 309 to 329 (SLVSEASILAVFISLITGTAG) form a helical membrane-spanning segment. The Cytoplasmic portion of the chain corresponds to 330–360 (NAGTQSLAVAVRRLAMKDEKDSNFGRLILSE). The chain crosses the membrane as a helical span at residues 361–381 (VLTGLVTGAVTGLTIMIVVGV). The Extracellular segment spans residues 382-389 (WQHNLPLG). Residues 390-410 (FVIGMAMLCAITVANLAGSLI) form a helical membrane-spanning segment. Over 411–427 (PMLMDKLGFDPAVASGP) the chain is Cytoplasmic. The helical transmembrane segment at 428 to 448 (FITTLSDLTSVLIYFNIASMF) threads the bilayer. D434 lines the Mg(2+) pocket. Residues 449-453 (MRYFV) lie on the Extracellular side of the membrane.

This sequence belongs to the SLC41A transporter family. Homodimer.

It localises to the cell membrane. It catalyses the reaction Mg(2+)(in) = Mg(2+)(out). Acts as a magnesium transporter. This Enterococcus faecalis (strain ATCC 700802 / V583) protein is Magnesium transporter MgtE.